Here is a 481-residue protein sequence, read N- to C-terminus: Sestrin-1 (481 aa).

The N-terminal domain; may mediate the alkylhydroperoxide reductase activity stretch occupies residues 63-244; it reads FADAFTDLGR…ICDITNGNHG (182 aa). Cysteine 122 acts as the Cysteine sulfenic acid (-SOH) intermediate in catalysis. Residues 295–316 are disordered; it reads KTESMVFSTEDEDPPPDIDVSR. A C-terminal domain; mediates TORC1 regulation region spans residues 310-481; the sequence is PDIDVSRHFE…ALRAITRYMT (172 aa). L-leucine-binding positions include 375-378, threonine 387, and glutamate 452; that span reads TYNT.

This sequence belongs to the sestrin family.

Its subcellular location is the nucleus. It localises to the cytoplasm. It catalyses the reaction a hydroperoxide + L-cysteinyl-[protein] = S-hydroxy-L-cysteinyl-[protein] + an alcohol. Functionally, may function as an intracellular leucine sensor that negatively regulates the TORC1 signaling pathway through the GATOR complex. In absence of leucine, binds the GATOR subcomplex GATOR2 and prevents TORC1 signaling. Binding of leucine to SESN2 disrupts its interaction with GATOR2 thereby activating the TORC1 signaling pathway. This stress-inducible metabolic regulator may also play a role in protection against oxidative and genotoxic stresses. May prevent the accumulation of reactive oxygen species (ROS) through the alkylhydroperoxide reductase activity born by the N-terminal domain of the protein. The sequence is that of Sestrin-1 from Xenopus laevis (African clawed frog).